A 257-amino-acid polypeptide reads, in one-letter code: Thiazole synthase (257 aa).

Lysine 96 (schiff-base intermediate with DXP) is an active-site residue. 1-deoxy-D-xylulose 5-phosphate contacts are provided by residues glycine 157, 184–185 (AG), and 206–207 (NT).

This sequence belongs to the ThiG family. In terms of assembly, homotetramer. Forms heterodimers with either ThiH or ThiS.

Its subcellular location is the cytoplasm. The enzyme catalyses [ThiS sulfur-carrier protein]-C-terminal-Gly-aminoethanethioate + 2-iminoacetate + 1-deoxy-D-xylulose 5-phosphate = [ThiS sulfur-carrier protein]-C-terminal Gly-Gly + 2-[(2R,5Z)-2-carboxy-4-methylthiazol-5(2H)-ylidene]ethyl phosphate + 2 H2O + H(+). It functions in the pathway cofactor biosynthesis; thiamine diphosphate biosynthesis. Its function is as follows. Catalyzes the rearrangement of 1-deoxy-D-xylulose 5-phosphate (DXP) to produce the thiazole phosphate moiety of thiamine. Sulfur is provided by the thiocarboxylate moiety of the carrier protein ThiS. In vitro, sulfur can be provided by H(2)S. This is Thiazole synthase from Rhizobium rhizogenes (strain K84 / ATCC BAA-868) (Agrobacterium radiobacter).